The sequence spans 316 residues: Ribosomal RNA small subunit methyltransferase H (316 aa).

Residues 42-44, D62, F86, D104, and Q111 contribute to the S-adenosyl-L-methionine site; that span reads GGH.

It belongs to the methyltransferase superfamily. RsmH family.

The protein resides in the cytoplasm. The catalysed reaction is cytidine(1402) in 16S rRNA + S-adenosyl-L-methionine = N(4)-methylcytidine(1402) in 16S rRNA + S-adenosyl-L-homocysteine + H(+). Specifically methylates the N4 position of cytidine in position 1402 (C1402) of 16S rRNA. The sequence is that of Ribosomal RNA small subunit methyltransferase H from Polynucleobacter asymbioticus (strain DSM 18221 / CIP 109841 / QLW-P1DMWA-1) (Polynucleobacter necessarius subsp. asymbioticus).